Reading from the N-terminus, the 250-residue chain is MADDLGLDLGKKKKSKKVIKIDGDDAPVETGVEAVEDGLGELNLGAKKKKKTPKTAGEEVVEEKVPTLEIGIGAQNLIDAKGAWPDYTYEEALTLVYQVMKDKNPDFAGDKKKFAIKLPEVARAGSKKTAFSNFLEICRLMKRQDKHVLQFLLAELGTTGSIDGSNCLIVKGRWQQKQFESVLRKYIKEYVMCHTCKSPETQLTKDTRLFFLQCTNCGSRCSVTAIKSGFKAVVGKRAAIRRAEEATAGK.

The C4-type zinc finger occupies 193 to 217; it reads CHTCKSPETQLTKDTRLFFLQCTNC.

The protein belongs to the eIF-2-beta/eIF-5 family. In terms of assembly, eukaryotic translation initiation factor 2 eIF2 is a heterotrimeric complex composed of an alpha, a beta and a gamma subunit.

It is found in the cytoplasm. It localises to the cytosol. Component of the eIF2 complex that functions in the early steps of protein synthesis by forming a ternary complex with GTP and initiator tRNA. This complex binds to a 40S ribosomal subunit, followed by mRNA binding to form a 43S pre-initiation complex (43S PIC). Junction of the 60S ribosomal subunit to form the 80S initiation complex is preceded by hydrolysis of the GTP bound to eIF2 and release of an eIF2-GDP binary complex. In order for eIF2 to recycle and catalyze another round of initiation, the GDP bound to eIF2 must exchange with GTP by way of a reaction catalyzed by eIF2B. This is Eukaryotic translation initiation factor 2 subunit 2 from Caenorhabditis elegans.